Reading from the N-terminus, the 204-residue chain is Tat proofreading chaperone DmsD (204 aa).

The protein belongs to the TorD/DmsD family. DmsD subfamily. In terms of assembly, monomer in solution.

Required for biogenesis/assembly of DMSO reductase, but not for the interaction of the DmsA signal peptide with the Tat system. May be part of a chaperone cascade complex that facilitates a folding-maturation pathway for the substrate protein. In Salmonella typhimurium (strain LT2 / SGSC1412 / ATCC 700720), this protein is Tat proofreading chaperone DmsD.